We begin with the raw amino-acid sequence, 426 residues long: Tachykinins (426 aa).

Residues 1–116 constitute a propeptide that is removed on maturation; it reads MQCDFRVHQD…IEDNLSHEFE (116 aa). Arginine 127 carries the post-translational modification Arginine amide. Positions 131–145 are excised as a propeptide; that stretch reads GYLTPDFEDSYFRDE. Arginine amide is present on arginine 156. A propeptide spanning residues 160–167 is cleaved from the precursor; it reads VVSDDDYY. Position 178 is an arginine amide (arginine 178). A propeptide spanning residues 182 to 235 is cleaved from the precursor; the sequence is SLEEVLGEIEKKAAMDYYDTRDKKTYVFEYPEDYEKRLLASIRGKLKEFPMEWE. Arginine amide is present on arginine 246. The propeptide occupies 250-259; that stretch reads SLLDEIEELE. Arginine 270 bears the Arginine amide mark. The propeptide occupies 274–291; it reads NALENYIDYYLDPDMDFD. The tract at residues 299–329 is disordered; that stretch reads QGMRGKKDSDKRAPMGFQGMRGKRNTGQRFD. Arginine 302 is modified (arginine amide). A propeptide spanning residues 306-308 is cleaved from the precursor; the sequence is DSD. Position 319 is an arginine amide (arginine 319). Residues 323-358 constitute a propeptide that is removed on maturation; that stretch reads NTGQRFDTGINFNIRSSNEYQGTNNRRNALASCQLE. Arginine 369 and arginine 386 each carry arginine amide. Residues 390-426 constitute a propeptide that is removed on maturation; sequence WATAPYEDDSPFISVFDNTERIGVDGDSPAILGNSIS.

Belongs to the tachykinin family. As to expression, tachykinins (TK) are expressed throughout the nervous system. APMGFQGMR-amide is also expressed in the retrocerebral complex (at protein level).

It localises to the secreted. In terms of biological role, tachykinins are active peptides which excite neurons, evoke behavioral responses, are potent vasodilators and secretagogues, and contract (directly or indirectly) many smooth muscles. The chain is Tachykinins from Camponotus floridanus (Florida carpenter ant).